The sequence spans 231 residues: MRMMRAIKQGQWAILLWPYLLTTSIPLDCRDEQGGLSRCPSISQEKLLDRVIQHAELIYRVSEESCSLFEEMFIPFPLQLQRNQAGYPCITKALPIPSSKSEIQQISDKWLLHSVLMLVQSWIEPLVYLQTTLNRYDGVPDMLLNKTKWVSDKLMSLEQGVAVLIKKMLDEGLMTTTYSEQGLFQDDGQPEMLEYVMRDYTLLSCFKKDAHKMEILLKLLKCRQNDIHSCA.

A signal peptide spans 1-24; that stretch reads MRMMRAIKQGQWAILLWPYLLTTS. Cystine bridges form between cysteine 29/cysteine 39, cysteine 89/cysteine 205, and cysteine 222/cysteine 230. Asparagine 145 carries an N-linked (GlcNAc...) asparagine glycan.

The protein belongs to the somatotropin/prolactin family. In terms of tissue distribution, pituitary gland.

It localises to the secreted. This chain is Somatolactin-2, found in Sparus aurata (Gilthead sea bream).